Reading from the N-terminus, the 328-residue chain is Ketol-acid reductoisomerase (NADP(+)) (328 aa).

A KARI N-terminal Rossmann domain is found at 2–182 (AKIYTDREAS…GATRAGVIET (181 aa)). Residues 25 to 28 (YGIQ), R48, S53, and 83 to 86 (DMEQ) contribute to the NADP(+) site. Residue H108 is part of the active site. G134 provides a ligand contact to NADP(+). One can recognise a KARI C-terminal knotted domain in the interval 183 to 328 (TFAEETETDL…EEMRKLLFGP (146 aa)). Mg(2+) contacts are provided by D191, E195, E227, and E231. A substrate-binding site is contributed by S252.

Belongs to the ketol-acid reductoisomerase family. Mg(2+) is required as a cofactor.

The enzyme catalyses (2R)-2,3-dihydroxy-3-methylbutanoate + NADP(+) = (2S)-2-acetolactate + NADPH + H(+). The catalysed reaction is (2R,3R)-2,3-dihydroxy-3-methylpentanoate + NADP(+) = (S)-2-ethyl-2-hydroxy-3-oxobutanoate + NADPH + H(+). It participates in amino-acid biosynthesis; L-isoleucine biosynthesis; L-isoleucine from 2-oxobutanoate: step 2/4. Its pathway is amino-acid biosynthesis; L-valine biosynthesis; L-valine from pyruvate: step 2/4. In terms of biological role, involved in the biosynthesis of branched-chain amino acids (BCAA). Catalyzes an alkyl-migration followed by a ketol-acid reduction of (S)-2-acetolactate (S2AL) to yield (R)-2,3-dihydroxy-isovalerate. In the isomerase reaction, S2AL is rearranged via a Mg-dependent methyl migration to produce 3-hydroxy-3-methyl-2-ketobutyrate (HMKB). In the reductase reaction, this 2-ketoacid undergoes a metal-dependent reduction by NADPH to yield (R)-2,3-dihydroxy-isovalerate. The polypeptide is Ketol-acid reductoisomerase (NADP(+)) (Pyrobaculum aerophilum (strain ATCC 51768 / DSM 7523 / JCM 9630 / CIP 104966 / NBRC 100827 / IM2)).